The primary structure comprises 363 residues: S-adenosylmethionine:tRNA ribosyltransferase-isomerase (363 aa).

This sequence belongs to the QueA family. As to quaternary structure, monomer.

The protein resides in the cytoplasm. It carries out the reaction 7-aminomethyl-7-carbaguanosine(34) in tRNA + S-adenosyl-L-methionine = epoxyqueuosine(34) in tRNA + adenine + L-methionine + 2 H(+). Its pathway is tRNA modification; tRNA-queuosine biosynthesis. Transfers and isomerizes the ribose moiety from AdoMet to the 7-aminomethyl group of 7-deazaguanine (preQ1-tRNA) to give epoxyqueuosine (oQ-tRNA). The sequence is that of S-adenosylmethionine:tRNA ribosyltransferase-isomerase from Mannheimia succiniciproducens (strain KCTC 0769BP / MBEL55E).